Reading from the N-terminus, the 572-residue chain is AAA ATPase forming ring-shaped complexes (572 aa).

Residues 1-22 form a disordered region; the sequence is MTEPRHESGSAAPQRPATDPVQ. Positions 21–67 form a coiled coil; sequence VQRQVNLLRDQKRNLDKQAAALASQNEKLVRLLNASRQEIVGLKKTL. An ATP-binding site is contributed by 270 to 275; the sequence is GNGKTL. The span at 527–539 shows a compositional bias: acidic residues; that stretch reads HEQQDLPDTEDSE. The disordered stretch occupies residues 527–572; it reads HEQQDLPDTEDSEDWARLTGRRGDTIDSVHMASHRPQGEPGPGATP.

It belongs to the AAA ATPase family. Homohexamer. Assembles into a hexameric ring structure.

The chain is AAA ATPase forming ring-shaped complexes from Kocuria rhizophila (strain ATCC 9341 / DSM 348 / NBRC 103217 / DC2201).